The sequence spans 505 residues: MFS-type transporter oryN (505 aa).

The segment at 1–54 (MAVAELPNIVSTDSSPSPHPGSRLSSEPTDIESQKAPSNAEPKTDPNLVTWDGP) is disordered. Helical transmembrane passes span 69-89 (AFVT…SSIF), 106-126 (VVTL…PVWG), 135-155 (KWPM…VAVA), 166-186 (FLTG…LVDM), 193-213 (GVAM…APLM), 226-246 (FTQW…VFGL), 280-300 (GIKD…VTEP), 301-321 (ILLL…LVFV), 337-357 (ISAL…AIVV), 376-396 (LPLM…FAWT), 401-421 (IHWA…YMVF), 440-460 (IGAN…FGPF), and 468-488 (AWAS…PVLF).

It belongs to the major facilitator superfamily. CAR1 family.

It localises to the membrane. In terms of biological role, MFS-type transporter; part of the gene cluster that mediates the biosynthesis of oryzines, natural products with an unusual maleidride backbone. The sequence is that of MFS-type transporter oryN from Aspergillus oryzae (strain ATCC 42149 / RIB 40) (Yellow koji mold).